A 327-amino-acid chain; its full sequence is Geranylgeranyl transferase type-2 subunit alpha (327 aa).

PFTA repeat units follow at residues 44-78, 84-118, 123-157, 163-197, and 207-241; these read YSIE…SLAS, FWDK…HYPT, VWQT…NIES, LDKE…RMFQ, and YIRT…NDIV.

The protein belongs to the protein prenyltransferase subunit alpha family. In terms of assembly, heterodimer of an alpha and a beta subunit.

The catalysed reaction is geranylgeranyl diphosphate + L-cysteinyl-[protein] = S-geranylgeranyl-L-cysteinyl-[protein] + diphosphate. In terms of biological role, catalyzes the transfer of a geranyl-geranyl moiety from geranyl-geranyl pyrophosphate to proteins having the C-terminal -XCC or -XCXC, where both cysteines may become modified. Acts on YPT1 and SEC4. The protein is Geranylgeranyl transferase type-2 subunit alpha (BET4) of Saccharomyces cerevisiae (strain ATCC 204508 / S288c) (Baker's yeast).